Here is a 219-residue protein sequence, read N- to C-terminus: 16S rRNA (adenine(1408)-N(1))-methyltransferase (219 aa).

S-adenosyl-L-methionine-binding positions include Gly32, Asn38, Asp55, 87-88, 104-109, and 195-197; these read AE, LFPWGT, and SLW.

The protein belongs to the methyltransferase superfamily. Kanamycin-apramycin resistance family.

The catalysed reaction is adenosine(1408) in 16S rRNA + S-adenosyl-L-methionine = N(1)-methyladenosine(1408) in 16S rRNA + S-adenosyl-L-homocysteine + H(+). In terms of biological role, specifically methylates the N(1) position of adenine 1408 in 16S rRNA. Confers resistance to various aminoglycosides, including kanamycin, neomycin, apramycin, ribostamycin and gentamicin. Methylates only fully assembled 30S subunits. This is 16S rRNA (adenine(1408)-N(1))-methyltransferase (npmA) from Escherichia coli.